We begin with the raw amino-acid sequence, 345 residues long: Arginine N-succinyltransferase (345 aa).

Succinyl-CoA is bound at residue leucine 125. Histidine 229 serves as the catalytic Proton donor.

It belongs to the arginine N-succinyltransferase family.

It carries out the reaction succinyl-CoA + L-arginine = N(2)-succinyl-L-arginine + CoA + H(+). Its pathway is amino-acid degradation; L-arginine degradation via AST pathway; L-glutamate and succinate from L-arginine: step 1/5. Functionally, catalyzes the transfer of succinyl-CoA to arginine to produce N(2)-succinylarginine. The polypeptide is Arginine N-succinyltransferase (Yersinia enterocolitica serotype O:8 / biotype 1B (strain NCTC 13174 / 8081)).